Reading from the N-terminus, the 171-residue chain is 3-hydroxydecanoyl-[acyl-carrier-protein] dehydratase (171 aa).

Residue H71 is part of the active site.

This sequence belongs to the thioester dehydratase family. FabA subfamily. In terms of assembly, homodimer.

It is found in the cytoplasm. The catalysed reaction is a (3R)-hydroxyacyl-[ACP] = a (2E)-enoyl-[ACP] + H2O. The enzyme catalyses (3R)-hydroxydecanoyl-[ACP] = (2E)-decenoyl-[ACP] + H2O. It carries out the reaction (2E)-decenoyl-[ACP] = (3Z)-decenoyl-[ACP]. Its pathway is lipid metabolism; fatty acid biosynthesis. Necessary for the introduction of cis unsaturation into fatty acids. Catalyzes the dehydration of (3R)-3-hydroxydecanoyl-ACP to E-(2)-decenoyl-ACP and then its isomerization to Z-(3)-decenoyl-ACP. Can catalyze the dehydratase reaction for beta-hydroxyacyl-ACPs with saturated chain lengths up to 16:0, being most active on intermediate chain length. The polypeptide is 3-hydroxydecanoyl-[acyl-carrier-protein] dehydratase (Sinorhizobium medicae (strain WSM419) (Ensifer medicae)).